The sequence spans 441 residues: ATP-dependent RNA helicase sub2 (441 aa).

Positions aspartate 19–alanine 29 are enriched in low complexity. Residues aspartate 19–glycine 43 are disordered. The Q motif signature appears at threonine 58 to glutamine 86. Residues isoleucine 89–valine 264 enclose the Helicase ATP-binding domain. Residue alanine 102–threonine 109 coordinates ATP. The DEAD box motif lies at aspartate 211 to aspartate 214. The 162-residue stretch at glycine 276–serine 437 folds into the Helicase C-terminal domain.

This sequence belongs to the DEAD box helicase family. DECD subfamily.

The protein localises to the nucleus. It catalyses the reaction ATP + H2O = ADP + phosphate + H(+). Functionally, ATP-binding RNA helicase involved in transcription elongation and required for the export of mRNA out of the nucleus. SUB2 also plays a role in pre-mRNA splicing and spliceosome assembly. May be involved in rDNA and telomeric silencing, and maintenance of genome integrity. This is ATP-dependent RNA helicase sub2 (sub2) from Aspergillus clavatus (strain ATCC 1007 / CBS 513.65 / DSM 816 / NCTC 3887 / NRRL 1 / QM 1276 / 107).